The following is a 448-amino-acid chain: Antizyme inhibitor 1 (448 aa).

The protein belongs to the Orn/Lys/Arg decarboxylase class-II family. ODC antizyme inhibitor subfamily. In terms of assembly, monomer. Interacts with OAZ1 and OAZ3; this interaction disrupts the interaction between the antizyme and ODC1. Post-translationally, ubiquitinated, leading to its proteasomal degradation; a process that is reduced in presence of antizyme OAZ1. In terms of tissue distribution, expressed during testis development.

The protein resides in the nucleus. Functionally, antizyme inhibitor (AZI) protein that positively regulates ornithine decarboxylase (ODC) activity and polyamine uptake. AZI is an enzymatically inactive ODC homolog that counteracts the negative effect of ODC antizymes (AZs) OAZ1, OAZ2 and OAZ3 on ODC activity by competing with ODC for antizyme-binding. Inhibits antizyme-dependent ODC degradation and releases ODC monomers from their inactive complex with antizymes, leading to formation of the catalytically active ODC homodimer and restoring polyamine production. The sequence is that of Antizyme inhibitor 1 (Azin1) from Mus musculus (Mouse).